A 74-amino-acid polypeptide reads, in one-letter code: uncharacterized protein (74 aa).

Its subcellular location is the mitochondrion. This is an uncharacterized protein from Marchantia polymorpha (Common liverwort).